The primary structure comprises 145 residues: Mediator of RNA polymerase II transcription subunit 21 (145 aa).

The stretch at 79–112 (EESTAALQAASLRQLEEENQEAAARLEEVVYRGD) forms a coiled coil.

This sequence belongs to the Mediator complex subunit 21 family. As to quaternary structure, component of the Mediator complex.

It localises to the nucleus. Its function is as follows. Component of the Mediator complex, a coactivator involved in the regulated transcription of nearly all RNA polymerase II-dependent genes. Mediator functions as a bridge to convey information from gene-specific regulatory proteins to the basal RNA polymerase II transcription machinery. Mediator is recruited to promoters by direct interactions with regulatory proteins and serves as a scaffold for the assembly of a functional preinitiation complex with RNA polymerase II and the general transcription factors. The protein is Mediator of RNA polymerase II transcription subunit 21 (med21) of Danio rerio (Zebrafish).